Reading from the N-terminus, the 166-residue chain is MRLILLSGLLLLGIFLANGDEVDPDRKLLNSLIDALMHLQREFANLKGSFLIVHKARSFGSGSERMYVTNKEIKNFEALRQICEQADGHIPSPQLENQNKAFANVLERHGKEAYLVVGDSANFTNWAAGEPNKAAGACVKADTHGSWHSASCDDNLLVVCEFYFIL.

Residues 1 to 19 (MRLILLSGLLLLGIFLANG) form the signal peptide. Residues 46–161 (LKGSFLIVHK…CDDNLLVVCE (116 aa)) enclose the C-type lectin domain. Cystine bridges form between Cys-83/Cys-160 and Cys-138/Cys-152. Asn-122 carries N-linked (GlcNAc...) asparagine glycosylation.

The protein belongs to the alpha-type phospholipase A2 inhibitor family. In terms of assembly, homotrimer; non-covalently linked. In terms of tissue distribution, expressed by the liver.

The protein localises to the secreted. Its function is as follows. This phospholipase A2 inhibitor binds directly phospholipase A2 in the presence or absence of calcium. The protein is Phospholipase A2 inhibitor clone 11 of Bothrops neuwiedi (Neuwied's lancehead).